The following is a 485-amino-acid chain: Glutamyl-tRNA(Gln) amidotransferase subunit A (485 aa).

Active-site charge relay system residues include lysine 80 and serine 155. The active-site Acyl-ester intermediate is the serine 179.

The protein belongs to the amidase family. GatA subfamily. In terms of assembly, heterotrimer of A, B and C subunits.

The catalysed reaction is L-glutamyl-tRNA(Gln) + L-glutamine + ATP + H2O = L-glutaminyl-tRNA(Gln) + L-glutamate + ADP + phosphate + H(+). Allows the formation of correctly charged Gln-tRNA(Gln) through the transamidation of misacylated Glu-tRNA(Gln) in organisms which lack glutaminyl-tRNA synthetase. The reaction takes place in the presence of glutamine and ATP through an activated gamma-phospho-Glu-tRNA(Gln). The sequence is that of Glutamyl-tRNA(Gln) amidotransferase subunit A from Leptospira borgpetersenii serovar Hardjo-bovis (strain L550).